The following is a 248-amino-acid chain: MIRVGVLGAKGRVGTTIVAEVEQNPNLELSAALDHGDDLQELVDAKTDVVVDFTQPDSVMSNVEFCIRNGIHAVIGTTGWTEERYETVRSLLQDSPKVGVLVAPNFAISAVLTMKFAEIAAPFFESAEVIEFHHPNKLDAPSGTAVHTAEGIARARREAGLEEQPDATAQSLDGARGSDVQGVPVHAVRMTGMVAHEEVIFGTRGQSLTIRQDSYDRESFVPGVVIGVEKIADNPGLTIGLEKFLGLD.

Residues 8 to 13, aspartate 34, 76 to 78, and 103 to 106 contribute to the NAD(+) site; these read GAKGRV, GTT, and APNF. The active-site Proton donor/acceptor is histidine 133. A (S)-2,3,4,5-tetrahydrodipicolinate-binding site is contributed by histidine 134. Lysine 137 (proton donor) is an active-site residue. (S)-2,3,4,5-tetrahydrodipicolinate is bound at residue 143–144; it reads GT.

This sequence belongs to the DapB family.

The protein resides in the cytoplasm. The catalysed reaction is (S)-2,3,4,5-tetrahydrodipicolinate + NAD(+) + H2O = (2S,4S)-4-hydroxy-2,3,4,5-tetrahydrodipicolinate + NADH + H(+). The enzyme catalyses (S)-2,3,4,5-tetrahydrodipicolinate + NADP(+) + H2O = (2S,4S)-4-hydroxy-2,3,4,5-tetrahydrodipicolinate + NADPH + H(+). It functions in the pathway amino-acid biosynthesis; L-lysine biosynthesis via DAP pathway; (S)-tetrahydrodipicolinate from L-aspartate: step 4/4. Its function is as follows. Catalyzes the conversion of 4-hydroxy-tetrahydrodipicolinate (HTPA) to tetrahydrodipicolinate. This is 4-hydroxy-tetrahydrodipicolinate reductase from Corynebacterium urealyticum (strain ATCC 43042 / DSM 7109).